Reading from the N-terminus, the 473-residue chain is Pup--protein ligase (473 aa).

Residue glutamate 9 participates in Mg(2+) binding. An ATP-binding site is contributed by arginine 54. Tyrosine 56 is a binding site for Mg(2+). Aspartate 58 (proton acceptor) is an active-site residue. Glutamate 64 serves as a coordination point for Mg(2+). Threonine 67 and tryptophan 425 together coordinate ATP.

This sequence belongs to the Pup ligase/Pup deamidase family. Pup-conjugating enzyme subfamily.

It catalyses the reaction ATP + [prokaryotic ubiquitin-like protein]-L-glutamate + [protein]-L-lysine = ADP + phosphate + N(6)-([prokaryotic ubiquitin-like protein]-gamma-L-glutamyl)-[protein]-L-lysine.. The protein operates within protein degradation; proteasomal Pup-dependent pathway. Its pathway is protein modification; protein pupylation. Functionally, catalyzes the covalent attachment of the prokaryotic ubiquitin-like protein modifier Pup to the proteasomal substrate proteins, thereby targeting them for proteasomal degradation. This tagging system is termed pupylation. The ligation reaction involves the side-chain carboxylate of the C-terminal glutamate of Pup and the side-chain amino group of a substrate lysine. This is Pup--protein ligase from Brachybacterium faecium (strain ATCC 43885 / DSM 4810 / JCM 11609 / LMG 19847 / NBRC 14762 / NCIMB 9860 / 6-10).